The primary structure comprises 355 residues: Protein RecA (355 aa).

Residue Gly-67–Thr-74 participates in ATP binding.

This sequence belongs to the RecA family.

It localises to the cytoplasm. In terms of biological role, can catalyze the hydrolysis of ATP in the presence of single-stranded DNA, the ATP-dependent uptake of single-stranded DNA by duplex DNA, and the ATP-dependent hybridization of homologous single-stranded DNAs. It interacts with LexA causing its activation and leading to its autocatalytic cleavage. The polypeptide is Protein RecA (Histophilus somni (strain 129Pt) (Haemophilus somnus)).